A 206-amino-acid chain; its full sequence is uncharacterized protein (206 aa).

This is an uncharacterized protein from Aquifex aeolicus (strain VF5).